The primary structure comprises 224 residues: tRNA (guanine-N(7)-)-methyltransferase (224 aa).

Positions 54, 79, and 129 each coordinate S-adenosyl-L-methionine. Residue aspartate 129 is part of the active site. Positions 133 and 165 each coordinate substrate.

It belongs to the class I-like SAM-binding methyltransferase superfamily. TrmB family.

The catalysed reaction is guanosine(46) in tRNA + S-adenosyl-L-methionine = N(7)-methylguanosine(46) in tRNA + S-adenosyl-L-homocysteine. It functions in the pathway tRNA modification; N(7)-methylguanine-tRNA biosynthesis. Its function is as follows. Catalyzes the formation of N(7)-methylguanine at position 46 (m7G46) in tRNA. The polypeptide is tRNA (guanine-N(7)-)-methyltransferase (Chlamydia pneumoniae (Chlamydophila pneumoniae)).